Here is a 134-residue protein sequence, read N- to C-terminus: MRGVFFVAVAVAIFARSSAEAKLLSEAAPGLAADAVISGESRERFLRVADPEDDDLAAPADDGKTEERAPKFKSLNEIHKKLDEEDMVHVSKILGNMGAIHADNIAKARAALKAAHESGATTANQLVAGLAKPV.

A signal peptide spans 1–21 (MRGVFFVAVAVAIFARSSAEA). A RxLR-dEER motif is present at residues 44–68 (RFLRVADPEDDDLAAPADDGKTEER). The interval 49–70 (ADPEDDDLAAPADDGKTEERAP) is disordered. Residues 61-70 (DDGKTEERAP) are compositionally biased toward basic and acidic residues.

It belongs to the RxLR effector family. Interacts with host 1-aminocyclopropane-1-carboxylate synthases ACS1, ACS2, ACS3, ACS10 and ACS12.

The protein localises to the secreted. It localises to the host cytoplasm. The protein resides in the host nucleus. Functionally, effector that suppresses plant defense responses during the early stages of pathogen infection. Suppresses cell death induced by effectors and PAMPs in plant hosts. Is able to induced cell death in tomato, tobacco, eggplant, and potato, but not in A.thaliana. Interacts with and destabilizes host 1-aminocyclopropane-1-carboxylate synthases. By suppressing type2 ACS-catalyzed ethylene biosynthesis, Avh238 facilitates Phytophthora infection. This is RxLR effector protein Avh238 (Avh238) from Phytophthora sojae (strain P6497) (Soybean stem and root rot agent).